The sequence spans 570 residues: Sulfite reductase [NADPH] hemoprotein beta-component (570 aa).

Residues cysteine 434, cysteine 440, cysteine 479, and cysteine 483 each coordinate [4Fe-4S] cluster. Residue cysteine 483 coordinates siroheme.

Belongs to the nitrite and sulfite reductase 4Fe-4S domain family. In terms of assembly, alpha(8)-beta(8). The alpha component is a flavoprotein, the beta component is a hemoprotein. Requires siroheme as cofactor. [4Fe-4S] cluster serves as cofactor.

The enzyme catalyses hydrogen sulfide + 3 NADP(+) + 3 H2O = sulfite + 3 NADPH + 4 H(+). It functions in the pathway sulfur metabolism; hydrogen sulfide biosynthesis; hydrogen sulfide from sulfite (NADPH route): step 1/1. In terms of biological role, component of the sulfite reductase complex that catalyzes the 6-electron reduction of sulfite to sulfide. This is one of several activities required for the biosynthesis of L-cysteine from sulfate. The sequence is that of Sulfite reductase [NADPH] hemoprotein beta-component from Salmonella paratyphi B (strain ATCC BAA-1250 / SPB7).